Consider the following 108-residue polypeptide: uncharacterized protein (108 aa).

T56 carries the post-translational modification Phosphothreonine. The segment at 89-108 is disordered; sequence AQAKGTEQAEALKKGTSKWF.

The protein resides in the cytoplasm. This is an uncharacterized protein from Schizosaccharomyces pombe (strain 972 / ATCC 24843) (Fission yeast).